Reading from the N-terminus, the 45-residue chain is Large ribosomal subunit protein bL34 (45 aa).

Residues 1-24 are disordered; sequence MTKRTFGGTSRKRKRVSGFRVRMR. The span at 10–24 shows a compositional bias: basic residues; it reads SRKRKRVSGFRVRMR.

This sequence belongs to the bacterial ribosomal protein bL34 family.

The protein is Large ribosomal subunit protein bL34 of Prochlorococcus marinus (strain MIT 9303).